The chain runs to 101 residues: NAD(P)H-quinone oxidoreductase subunit 4L, chloroplastic (101 aa).

3 consecutive transmembrane segments (helical) span residues 2 to 22, 32 to 52, and 61 to 81; these read MLEHILVLSAYLFSIGIYGLI, MCLELIFNSVNINFVTFSGFF, and IFSVFVFAIAAAEAAIGLAIV.

Belongs to the complex I subunit 4L family. As to quaternary structure, NDH is composed of at least 16 different subunits, 5 of which are encoded in the nucleus.

It localises to the plastid. It is found in the chloroplast thylakoid membrane. The enzyme catalyses a plastoquinone + NADH + (n+1) H(+)(in) = a plastoquinol + NAD(+) + n H(+)(out). The catalysed reaction is a plastoquinone + NADPH + (n+1) H(+)(in) = a plastoquinol + NADP(+) + n H(+)(out). Functionally, NDH shuttles electrons from NAD(P)H:plastoquinone, via FMN and iron-sulfur (Fe-S) centers, to quinones in the photosynthetic chain and possibly in a chloroplast respiratory chain. The immediate electron acceptor for the enzyme in this species is believed to be plastoquinone. Couples the redox reaction to proton translocation, and thus conserves the redox energy in a proton gradient. The sequence is that of NAD(P)H-quinone oxidoreductase subunit 4L, chloroplastic from Jasminum nudiflorum (Winter jasmine).